Reading from the N-terminus, the 311-residue chain is Malate dehydrogenase (311 aa).

NAD(+) contacts are provided by residues 7-13 and Asp34; that span reads GAAGGIG. Residues Arg81 and Arg87 each coordinate substrate. Residues Asn94 and 117 to 119 contribute to the NAD(+) site; that span reads ITN. Substrate is bound by residues Asn119 and Arg153. His177 serves as the catalytic Proton acceptor. Residue Met227 coordinates NAD(+).

This sequence belongs to the LDH/MDH superfamily. MDH type 1 family. As to quaternary structure, homodimer.

It carries out the reaction (S)-malate + NAD(+) = oxaloacetate + NADH + H(+). Catalyzes the reversible oxidation of malate to oxaloacetate. The sequence is that of Malate dehydrogenase from Histophilus somni (strain 2336) (Haemophilus somnus).